Reading from the N-terminus, the 474-residue chain is Salutaridinol 7-O-acetyltransferase (474 aa).

Histidine 163 functions as the Proton acceptor in the catalytic mechanism. The disordered stretch occupies residues 213–234 (ERLTSPSGMSEIPFSSTPEDTE). Residues 214-230 (RLTSPSGMSEIPFSSTP) show a composition bias toward polar residues. Aspartate 416 acts as the Proton acceptor in catalysis.

This sequence belongs to the plant acyltransferase family. As to expression, expressed in root, stem, leaf and capsule of the mature plant. Restricted to sieve elements of the phloem adjacent or proximal to laticifers.

The catalysed reaction is (7S)-salutaridinol + acetyl-CoA = (7S)-O-acetylsalutaridinol + CoA. It participates in alkaloid biosynthesis; morphine biosynthesis. Functionally, acetyltransferase involved in biosynthesis of morphinan-type benzylisoquinoline and opiate alkaloids natural products. Catalyzes the conversion of the phenanthrene alkaloid salutaridinol to salutaridinol-7-O-acetate, the immediate precursor of thebaine along the morphine biosynthetic pathway. Conversion of 7-O-acetylsalutaridinol into thebaine is spontaneous. The polypeptide is Salutaridinol 7-O-acetyltransferase (Papaver somniferum (Opium poppy)).